The following is a 261-amino-acid chain: Imidazole glycerol phosphate synthase subunit HisF (261 aa).

Residues aspartate 16 and aspartate 135 contribute to the active site.

The protein belongs to the HisA/HisF family. In terms of assembly, heterodimer of HisH and HisF.

It is found in the cytoplasm. It carries out the reaction 5-[(5-phospho-1-deoxy-D-ribulos-1-ylimino)methylamino]-1-(5-phospho-beta-D-ribosyl)imidazole-4-carboxamide + L-glutamine = D-erythro-1-(imidazol-4-yl)glycerol 3-phosphate + 5-amino-1-(5-phospho-beta-D-ribosyl)imidazole-4-carboxamide + L-glutamate + H(+). The protein operates within amino-acid biosynthesis; L-histidine biosynthesis; L-histidine from 5-phospho-alpha-D-ribose 1-diphosphate: step 5/9. IGPS catalyzes the conversion of PRFAR and glutamine to IGP, AICAR and glutamate. The HisF subunit catalyzes the cyclization activity that produces IGP and AICAR from PRFAR using the ammonia provided by the HisH subunit. This Mycobacterium leprae (strain Br4923) protein is Imidazole glycerol phosphate synthase subunit HisF.